A 38-amino-acid chain; its full sequence is RapG inhibitor (38 aa).

Residues 1–33 (MKRFLIGAGVAAVILSGWFIADHQTHSQEMKVA) constitute a propeptide that is removed on maturation.

The protein belongs to the Phr family. Contains a predicted signal peptide cleavage site in the N-terminal region, however the propeptide is probably subject to only one processing event, at the N-terminal end of the mature peptide.

Its subcellular location is the secreted. It is found in the cytoplasm. Signaling molecule involved in the regulation of expression of DegU-controlled genes. Secreted during production, but the mature peptide acts intracellularly, indicating that it needs to be imported into the cell to function. Stimulates the DegU-dependent expression of aprE, an extracellular alkaline protease. Acts by inhibiting RapG activity. At high concentrations, represses the DegS-dependent aprE expression. In Bacillus subtilis (strain 168), this protein is RapG inhibitor (phrG).